A 262-amino-acid polypeptide reads, in one-letter code: Proline-rich protein 23C (262 aa).

2 disordered regions span residues 1–52 (MGSR…AGTP) and 225–262 (VPSS…LFQE). Residues 226 to 242 (PSSPLQPLPPSPSPGPH) show a composition bias toward pro residues. Residues 243 to 252 (ARPELPERPP) are compositionally biased toward basic and acidic residues. A compositionally biased stretch (basic residues) spans 253–262 (CKVRRRLFQE).

It belongs to the PRR23 family.

The polypeptide is Proline-rich protein 23C (PRR23C) (Homo sapiens (Human)).